The following is a 344-amino-acid chain: 4-dimethylallyltryptophan N-methyltransferase easF (344 aa).

This sequence belongs to the methyltransferase superfamily. Homodimer.

It catalyses the reaction 4-(3-methylbut-2-enyl)-L-tryptophan + S-adenosyl-L-methionine = 4-(3-methylbut-2-enyl)-L-abrine + S-adenosyl-L-homocysteine + H(+). Its pathway is alkaloid biosynthesis; ergot alkaloid biosynthesis. Functionally, 4-dimethylallyltryptophan N-methyltransferase; part of the gene cluster that mediates the biosynthesis of fungal ergot alkaloid. DmaW catalyzes the first step of ergot alkaloid biosynthesis by condensing dimethylallyl diphosphate (DMAP) and tryptophan to form 4-dimethylallyl-L-tryptophan. The second step is catalyzed by the methyltransferase easF that methylates 4-dimethylallyl-L-tryptophan in the presence of S-adenosyl-L-methionine, resulting in the formation of 4-dimethylallyl-L-abrine. The catalase easC and the FAD-dependent oxidoreductase easE then transform 4-dimethylallyl-L-abrine to chanoclavine-I which is further oxidized by easD in the presence of NAD(+), resulting in the formation of chanoclavine-I aldehyde. Agroclavine dehydrogenase easG then mediates the conversion of chanoclavine-I aldehyde to agroclavine via a non-enzymatic adduct reaction: the substrate is an iminium intermediate that is formed spontaneously from chanoclavine-I aldehyde in the presence of glutathione. The presence of easA is not required to complete this reaction. Further conversion of agroclavine to paspalic acid is a two-step process involving oxidation of agroclavine to elymoclavine and of elymoclavine to paspalic acid, the second step being performed by the elymoclavine oxidase cloA. Paspalic acid is then further converted to D-lysergic acid. Ergopeptines are assembled from D-lysergic acid and three different amino acids by the D-lysergyl-peptide-synthetases composed each of a monomudular and a trimodular nonribosomal peptide synthetase subunit. LpsB and lpsC encode the monomodular subunits responsible for D-lysergic acid activation and incorporation into the ergopeptine backbone. LpsA1 and A2 subunits encode the trimodular nonribosomal peptide synthetase assembling the tripeptide portion of ergopeptines. LpsA1 is responsible for formation of the major ergopeptine, ergotamine, and lpsA2 for alpha-ergocryptine, the minor ergopeptine of the total alkaloid mixture elaborated by C.purpurea. D-lysergyl-tripeptides are assembled by the nonribosomal peptide synthetases and released as N-(D-lysergyl-aminoacyl)-lactams. Cyclolization of the D-lysergyl-tripeptides is performed by the Fe(2+)/2-ketoglutarate-dependent dioxygenase easH which introduces a hydroxyl group into N-(D-lysergyl-aminoacyl)-lactam at alpha-C of the aminoacyl residue followed by spontaneous condensation with the terminal lactam carbonyl group. This Claviceps purpurea (strain 20.1) (Ergot fungus) protein is 4-dimethylallyltryptophan N-methyltransferase easF.